Reading from the N-terminus, the 336-residue chain is GTPase Obg (336 aa).

The Obg domain occupies 1 to 159; sequence MKFVDEATLI…KTLKLELKLL (159 aa). Positions 160–329 constitute an OBG-type G domain; sequence ADVGLVGLPN…LIEAIFAQLR (170 aa). Residues 166–173, 191–195, 213–216, 283–286, and 310–312 contribute to the GTP site; these read GLPNAGKS, FTTLA, DIPG, NKMD, and SAI. Mg(2+) is bound by residues serine 173 and threonine 193.

It belongs to the TRAFAC class OBG-HflX-like GTPase superfamily. OBG GTPase family. Monomer. Mg(2+) serves as cofactor.

Its subcellular location is the cytoplasm. Functionally, an essential GTPase which binds GTP, GDP and possibly (p)ppGpp with moderate affinity, with high nucleotide exchange rates and a fairly low GTP hydrolysis rate. Plays a role in control of the cell cycle, stress response, ribosome biogenesis and in those bacteria that undergo differentiation, in morphogenesis control. In Desulfatibacillum aliphaticivorans, this protein is GTPase Obg.